Here is a 279-residue protein sequence, read N- to C-terminus: tRNA-cytidine(32) 2-sulfurtransferase (279 aa).

Residues 46-51 carry the PP-loop motif motif; it reads SGGKDS. [4Fe-4S] cluster contacts are provided by Cys-121, Cys-124, and Cys-212.

The protein belongs to the TtcA family. In terms of assembly, homodimer. Requires Mg(2+) as cofactor. [4Fe-4S] cluster is required as a cofactor.

It localises to the cytoplasm. The enzyme catalyses cytidine(32) in tRNA + S-sulfanyl-L-cysteinyl-[cysteine desulfurase] + AH2 + ATP = 2-thiocytidine(32) in tRNA + L-cysteinyl-[cysteine desulfurase] + A + AMP + diphosphate + H(+). The protein operates within tRNA modification. In terms of biological role, catalyzes the ATP-dependent 2-thiolation of cytidine in position 32 of tRNA, to form 2-thiocytidine (s(2)C32). The sulfur atoms are provided by the cysteine/cysteine desulfurase (IscS) system. In Marinomonas sp. (strain MWYL1), this protein is tRNA-cytidine(32) 2-sulfurtransferase.